Reading from the N-terminus, the 234-residue chain is Staphylococcal superantigen-like 5 (234 aa).

Residues 1 to 30 (MKMTAIAKASLALGILATGTITSLHQTVNA) form the signal peptide.

The protein belongs to the staphylococcal/streptococcal toxin family. Interacts with host SELPLG; this interaction prevents SELPLG-mediated neutrophil rolling. Interacts with host MMP9 (via sialic acid-containing O-glycans); this interaction inhibits MMP9 activity. Interacts with host GP1BA and GP6; these interactions play an important role in platelet binding and activation.

Its function is as follows. Secreted protein that plays a role in the inhibition of host innate immune system. Modulates the interaction between host SELPLG and P-selectin thereby preventing initial rolling of neutrophils toward the site of infection. Interferes with leukocyte trafficking by inhibiting host metalloproteinase-9/MMP9 activity. Also associates with two different platelet surface receptors GP1A and GP6 leading to platelet activation and aggregation. The chain is Staphylococcal superantigen-like 5 from Staphylococcus aureus (strain NCTC 8325 / PS 47).